The primary structure comprises 421 residues: UDP-N-acetylglucosamine 1-carboxyvinyltransferase 1 (421 aa).

A phosphoenolpyruvate-binding site is contributed by 22–23 (KN). UDP-N-acetyl-alpha-D-glucosamine is bound at residue Arg95. Cys119 serves as the catalytic Proton donor. Position 119 is a 2-(S-cysteinyl)pyruvic acid O-phosphothioketal (Cys119). Residues 124-128 (RPIEQ), Asp308, and Val330 each bind UDP-N-acetyl-alpha-D-glucosamine.

Belongs to the EPSP synthase family. MurA subfamily.

The protein resides in the cytoplasm. The enzyme catalyses phosphoenolpyruvate + UDP-N-acetyl-alpha-D-glucosamine = UDP-N-acetyl-3-O-(1-carboxyvinyl)-alpha-D-glucosamine + phosphate. Its pathway is cell wall biogenesis; peptidoglycan biosynthesis. Cell wall formation. Adds enolpyruvyl to UDP-N-acetylglucosamine. The chain is UDP-N-acetylglucosamine 1-carboxyvinyltransferase 1 from Staphylococcus epidermidis (strain ATCC 35984 / DSM 28319 / BCRC 17069 / CCUG 31568 / BM 3577 / RP62A).